The primary structure comprises 708 residues: Radial spoke head protein 6 homolog A (708 aa).

Disordered stretches follow at residues 1 to 94 (MGEP…GYTP), 376 to 407 (ETHG…IIPK), 495 to 514 (EEEG…FEEN), and 663 to 708 (GPEI…DLED). A compositionally biased stretch (polar residues) spans 10–32 (PSQTRRASQGSERARSQEYSQPL). Positions 47–56 (RGSRSSQGSQ) are enriched in low complexity. A compositionally biased stretch (acidic residues) spans 495–504 (EEEGDEEEEG). Over residues 680 to 690 (LKAAQEQALAA) the composition is skewed to low complexity. Acidic residues predominate over residues 691 to 708 (AEEEEEDEEEEEDEDLED).

The protein belongs to the flagellar radial spoke RSP4/6 family. In terms of assembly, component of the axonemal radial spoke 1 (RS1) and 2 (RS2) complexes, at least composed of spoke head proteins RSPH1, RSPH3, RSPH9 and the cilia-specific component RSPH4A or sperm-specific component RSPH6A, spoke stalk proteins RSPH14, DNAJB13, DYDC1, ROPN1L and NME5, and the RS1 complex-specific anchor protein IQUB. Interacts with RSPH1. Interacts with RSPH3B. Interacts with RSPH4A. Interacts with RSPH9. Interacts with RSPH10B. In terms of processing, phosphorylated by PKA. Phosphorylation increases in capacitated sperm. In terms of tissue distribution, expressed in sperm and testis (at protein level).

Its subcellular location is the cytoplasm. It localises to the cytoskeleton. It is found in the flagellum axoneme. Its function is as follows. Functions as part of radial spoke complexes in the axoneme of sperm flagella that play an important part in motility. The triple radial spokes (RS1, RS2 and RS3) are required to modulate beating of the sperm flagellum. This Mus musculus (Mouse) protein is Radial spoke head protein 6 homolog A.